We begin with the raw amino-acid sequence, 57 residues long: Aspartyl-phosphate phosphatase YnzD (57 aa).

This sequence belongs to the spo0E family.

Aspartyl-phosphate phosphatase which specifically dephosphorylates the sporulation transcription factor Spo0A-P and negatively regulates the sporulation initiation pathway in order to control the proper timing of sporulation. This is Aspartyl-phosphate phosphatase YnzD (ynzD) from Bacillus subtilis (strain 168).